The following is a 467-amino-acid chain: ATP synthase subunit beta (467 aa).

150-157 serves as a coordination point for ATP; that stretch reads GGAGVGKT.

Belongs to the ATPase alpha/beta chains family. In terms of assembly, F-type ATPases have 2 components, CF(1) - the catalytic core - and CF(0) - the membrane proton channel. CF(1) has five subunits: alpha(3), beta(3), gamma(1), delta(1), epsilon(1). CF(0) has three main subunits: a(1), b(2) and c(9-12). The alpha and beta chains form an alternating ring which encloses part of the gamma chain. CF(1) is attached to CF(0) by a central stalk formed by the gamma and epsilon chains, while a peripheral stalk is formed by the delta and b chains.

The protein localises to the cell inner membrane. It carries out the reaction ATP + H2O + 4 H(+)(in) = ADP + phosphate + 5 H(+)(out). In terms of biological role, produces ATP from ADP in the presence of a proton gradient across the membrane. The catalytic sites are hosted primarily by the beta subunits. The chain is ATP synthase subunit beta from Aliivibrio fischeri (strain MJ11) (Vibrio fischeri).